A 20-amino-acid chain; its full sequence is Collagenolytic protease 28 kDa (20 aa).

The 20-residue stretch at 1–20 (IVGGQEASPGSWPXQVGLFF) folds into the Peptidase S1 domain.

It belongs to the peptidase S1 family.

The catalysed reaction is Hydrolysis of proteins, with broad specificity for peptide bonds. Native collagen is cleaved about 75% of the length of the molecule from the N-terminus. Low activity on small molecule substrates of both trypsin and chymotrypsin.. Its function is as follows. This enzyme is a serine protease capable of degrading the native triple helix of collagen. The protein is Collagenolytic protease 28 kDa of Paralithodes camtschaticus (Red king crab).